The chain runs to 485 residues: ETS translocation variant 4 (485 aa).

A Glycyl lysine isopeptide (Lys-Gly) (interchain with G-Cter in SUMO2) cross-link involves residue Lys6. Disordered regions lie at residues 79-114 (PDFH…RKPP) and 135-214 (IAIK…QHQL). A Glycyl lysine isopeptide (Lys-Gly) (interchain with G-Cter in SUMO) cross-link involves residue Lys95. Ser100 is modified (phosphoserine). Lys138 is covalently cross-linked (Glycyl lysine isopeptide (Lys-Gly) (interchain with G-Cter in SUMO2)). Phosphoserine is present on residues Ser139 and Ser148. Positions 158–171 (QQQSLLRASSSSQS) are enriched in low complexity. A Phosphoserine modification is found at Ser215. Residues Lys227 and Lys261 each participate in a glycyl lysine isopeptide (Lys-Gly) (interchain with G-Cter in SUMO) cross-link. Residue Lys323 forms a Glycyl lysine isopeptide (Lys-Gly) (interchain with G-Cter in SUMO2) linkage. The segment at residues 342–422 (LQLWQFLVAL…AGERYVYKFV (81 aa)) is a DNA-binding region (ETS).

The protein belongs to the ETS family. Post-translationally, sumoylated; enhanced upon ERK/MAP kinase pathway activation it positively regulates the transcriptional activator capacity. Sumoylation at Lys-95 probably requires phosphorylation at Ser-100. Transiently polysumoylated and desumoylated by SENP1. Sumoylation is a prerequisite to polyubiquitination which in turn increases proteasomal-mediated degradation. Probably polyubiquitinated by RNF4 and deubiquitinated by USP2. In terms of tissue distribution, epididymis and brain.

Its subcellular location is the nucleus. Functionally, transcriptional activator. May play a role in keratinocyte differentiation. The sequence is that of ETS translocation variant 4 (Etv4) from Mus musculus (Mouse).